Here is a 116-residue protein sequence, read N- to C-terminus: UPF0342 protein RBAM_010030 (116 aa).

The protein belongs to the UPF0342 family.

The chain is UPF0342 protein RBAM_010030 from Bacillus velezensis (strain DSM 23117 / BGSC 10A6 / LMG 26770 / FZB42) (Bacillus amyloliquefaciens subsp. plantarum).